Consider the following 78-residue polypeptide: Defensin-like protein 74 (78 aa).

The first 28 residues, 1–28 (MNYKIGIMSLLVITSIIFLFLVPDKVEA), serve as a signal peptide directing secretion. Disulfide bonds link Cys32–Cys73, Cys36–Cys58, Cys42–Cys71, and Cys46–Cys72.

Belongs to the DEFL family.

Its subcellular location is the secreted. In Arabidopsis thaliana (Mouse-ear cress), this protein is Defensin-like protein 74 (LCR43).